The chain runs to 265 residues: Glutamate racemase (265 aa).

Substrate-binding positions include 10–11 and 42–43; these read DS and YG. Cysteine 73 acts as the Proton donor/acceptor in catalysis. 74-75 is a binding site for substrate; that stretch reads NT. Cysteine 184 (proton donor/acceptor) is an active-site residue. 185–186 is a substrate binding site; it reads TH.

Belongs to the aspartate/glutamate racemases family.

The enzyme catalyses L-glutamate = D-glutamate. Its pathway is cell wall biogenesis; peptidoglycan biosynthesis. Its function is as follows. Provides the (R)-glutamate required for cell wall biosynthesis. In Pediococcus pentosaceus (strain ATCC 25745 / CCUG 21536 / LMG 10740 / 183-1w), this protein is Glutamate racemase.